Here is a 691-residue protein sequence, read N- to C-terminus: Pleckstrin homology domain-containing family G member 7 (691 aa).

2 disordered regions span residues 1–48 (MEKT…ISTS) and 109–140 (TSEP…LQPV). Positions 313–488 (MIFMNTLRYL…EGKVKWLDNF (176 aa)) constitute a DH domain. The N-linked (GlcNAc...) asparagine glycan is linked to asparagine 395. The PH domain occupies 535–668 (HLLYEGKLTL…WMAQITTAIS (134 aa)).

In Homo sapiens (Human), this protein is Pleckstrin homology domain-containing family G member 7.